A 365-amino-acid polypeptide reads, in one-letter code: MDFSSSNGSEDTELSQAQIHLYKHVYNFVSSMALKSAMELGIADVIHSHGKPITLPELATALNLRPSKIGVLHRFLRLLTHNGFFAKTTVSRGEGAEEETAYGLTPPSKLLVKSNSTCLAPIVKGALHPSSLDMWRSSKKWFLEDNEELTLFESATGESFWEFLNKETESDTLSMFQEAMAADSHMFKLALKECKHVFEGLGSLVDVAGGRGGVTKLIREAFPHVKCTVFDQPQVVANLTGDENLNFVGGDMFKSVPPADAVLLKWVLHDWNDELSLKILKNCKEAISGRGKEGKVIIIDISIDETSDDRELTELKLDYDLVMLTMFNGKEREKKEWEKLIYDAGFSSYKITPICGFKSLIEVFP.

S-adenosyl-L-methionine contacts are provided by residues 207–210 (VAGG), aspartate 231, 231–232 (DQ), 251–252 (DM), and lysine 265. Histidine 269 functions as the Proton acceptor in the catalytic mechanism.

It belongs to the class I-like SAM-binding methyltransferase superfamily. Cation-independent O-methyltransferase family. COMT subfamily.

It carries out the reaction a 4'-hydroxyisoflavone + S-adenosyl-L-methionine = a 4'-methoxyisoflavone + S-adenosyl-L-homocysteine + H(+). It catalyses the reaction (2R,3S)-2,4',7-trihydroxyisoflavanone + S-adenosyl-L-methionine = (2R,3S)-2,7-dihydroxy-4'-methoxyisoflavanone + S-adenosyl-L-homocysteine + H(+). 2-hydroxyisoflavanone 4'-O-methyltransferase involved in the biosynthesis of formononetin. Can use 2,7,4'-trihydroxyisoflavanone as substrate, but not daidzein. This chain is Isoflavone 4'-O-methyltransferase (HI4'OMT), found in Lotus japonicus (Lotus corniculatus var. japonicus).